Consider the following 100-residue polypeptide: Large ribosomal subunit protein eL36A (100 aa).

N-acetylthreonine is present on Thr-2.

Belongs to the eukaryotic ribosomal protein eL36 family. Component of the large ribosomal subunit (LSU). Mature yeast ribosomes consist of a small (40S) and a large (60S) subunit. The 40S small subunit contains 1 molecule of ribosomal RNA (18S rRNA) and 33 different proteins (encoded by 57 genes). The large 60S subunit contains 3 rRNA molecules (25S, 5.8S and 5S rRNA) and 46 different proteins (encoded by 81 genes). N-terminally acetylated by acetyltransferase NatA.

The protein localises to the cytoplasm. Functionally, component of the ribosome, a large ribonucleoprotein complex responsible for the synthesis of proteins in the cell. The small ribosomal subunit (SSU) binds messenger RNAs (mRNAs) and translates the encoded message by selecting cognate aminoacyl-transfer RNA (tRNA) molecules. The large subunit (LSU) contains the ribosomal catalytic site termed the peptidyl transferase center (PTC), which catalyzes the formation of peptide bonds, thereby polymerizing the amino acids delivered by tRNAs into a polypeptide chain. The nascent polypeptides leave the ribosome through a tunnel in the LSU and interact with protein factors that function in enzymatic processing, targeting, and the membrane insertion of nascent chains at the exit of the ribosomal tunnel. The sequence is that of Large ribosomal subunit protein eL36A from Saccharomyces cerevisiae (strain ATCC 204508 / S288c) (Baker's yeast).